The following is a 398-amino-acid chain: Phosphoglycerate kinase (398 aa).

Substrate-binding positions include 21–23 (DFN), R36, 59–62 (HLGR), R119, and R157. Residues K208, G296, E327, and 354 to 357 (GGDS) each bind ATP.

This sequence belongs to the phosphoglycerate kinase family. In terms of assembly, monomer.

It is found in the cytoplasm. It catalyses the reaction (2R)-3-phosphoglycerate + ATP = (2R)-3-phospho-glyceroyl phosphate + ADP. The protein operates within carbohydrate degradation; glycolysis; pyruvate from D-glyceraldehyde 3-phosphate: step 2/5. This chain is Phosphoglycerate kinase, found in Streptococcus equi subsp. zooepidemicus (strain H70).